Here is a 76-residue protein sequence, read N- to C-terminus: Exodeoxyribonuclease 7 small subunit (76 aa).

It belongs to the XseB family. Heterooligomer composed of large and small subunits.

The protein localises to the cytoplasm. It catalyses the reaction Exonucleolytic cleavage in either 5'- to 3'- or 3'- to 5'-direction to yield nucleoside 5'-phosphates.. Its function is as follows. Bidirectionally degrades single-stranded DNA into large acid-insoluble oligonucleotides, which are then degraded further into small acid-soluble oligonucleotides. The chain is Exodeoxyribonuclease 7 small subunit from Arthrobacter sp. (strain FB24).